We begin with the raw amino-acid sequence, 140 residues long: Large ribosomal subunit protein bL17 (140 aa).

Residues Glu120–Ala140 form a disordered region.

The protein belongs to the bacterial ribosomal protein bL17 family. In terms of assembly, part of the 50S ribosomal subunit. Contacts protein L32.

The chain is Large ribosomal subunit protein bL17 from Erythrobacter litoralis (strain HTCC2594).